Reading from the N-terminus, the 293-residue chain is MFKGAGTALATPFTSTGELDLAVFEQLIEQQLAANIQALVVGGTTGEGSTLTNEEFETLLETAIRVTAGRVPVIAGTGTNNTAQTIEKTQTAARLGADAAMLVTPYYNKTSQAGLVAHFTAVADAVDLPIMLYNVPSRTGVAISVETAVTLAKHPNIQAFKEASGDVSFMGELMTALPDGFAVFCGNDDQILPYMAWGAQGVISVLSNPYPAETQALAEALLANDYTTARRIQSDLMPVISALFSDVNPIPVKAALEEIGLAVGAPRLPLVRQSEAGHAHLLETMRSYKGVVG.

Thr45 contacts pyruvate. Tyr133 (proton donor/acceptor) is an active-site residue. The active-site Schiff-base intermediate with substrate is the Lys161. Pyruvate is bound at residue Ile203.

It belongs to the DapA family. Homotetramer; dimer of dimers.

It localises to the cytoplasm. It carries out the reaction L-aspartate 4-semialdehyde + pyruvate = (2S,4S)-4-hydroxy-2,3,4,5-tetrahydrodipicolinate + H2O + H(+). Its pathway is amino-acid biosynthesis; L-lysine biosynthesis via DAP pathway; (S)-tetrahydrodipicolinate from L-aspartate: step 3/4. Functionally, catalyzes the condensation of (S)-aspartate-beta-semialdehyde [(S)-ASA] and pyruvate to 4-hydroxy-tetrahydrodipicolinate (HTPA). The protein is 4-hydroxy-tetrahydrodipicolinate synthase of Exiguobacterium sibiricum (strain DSM 17290 / CCUG 55495 / CIP 109462 / JCM 13490 / 255-15).